The following is a 126-amino-acid chain: H2B.U histone 2 (126 aa).

The interval 1–35 (MPEPSRSTPAPKKGSKKAITKAQKKDGKKRKRGRK) is disordered. Pro-2 is subject to N-acetylproline. Glu-3 carries the ADP-ribosyl glutamic acid modification. Ser-7 carries the post-translational modification ADP-ribosylserine. An N6-(beta-hydroxybutyryl)lysine; alternate modification is found at Lys-12. N6-acetyllysine; alternate occurs at positions 12 and 13. Lys-12 and Lys-13 each carry N6-crotonyllysine; alternate. Lys-12 bears the N6-lactoyllysine; alternate mark. Position 13 is an N6-(2-hydroxyisobutyryl)lysine; alternate (Lys-13). Ser-15 bears the Phosphoserine; by STK4/MST1 mark. 4 positions are modified to N6-acetyllysine; alternate: Lys-16, Lys-17, Lys-21, and Lys-24. N6-crotonyllysine; alternate occurs at positions 16, 17, 21, and 24. N6-lactoyllysine; alternate is present on residues Lys-16, Lys-17, Lys-21, and Lys-24. Lys-17 carries the N6-glutaryllysine; alternate modification. Lys-21 bears the N6-(beta-hydroxybutyryl)lysine; alternate mark. N6-(2-hydroxyisobutyryl)lysine; alternate occurs at positions 21 and 24. Position 21 is an N6-butyryllysine; alternate (Lys-21). A Glycyl lysine isopeptide (Lys-Gly) (interchain with G-Cter in SUMO2); alternate cross-link involves residue Lys-21. Lys-25 bears the N6-(2-hydroxyisobutyryl)lysine mark. Residue Lys-35 is modified to N6-(beta-hydroxybutyryl)lysine; alternate. N6-crotonyllysine; alternate is present on Lys-35. Lys-35 bears the N6-(2-hydroxyisobutyryl)lysine; alternate mark. Lys-35 carries the post-translational modification N6-glutaryllysine; alternate. Lys-35 is modified (N6-succinyllysine; alternate). Residue Lys-35 forms a Glycyl lysine isopeptide (Lys-Gly) (interchain with G-Cter in ubiquitin); alternate linkage. Glu-36 bears the PolyADP-ribosyl glutamic acid mark. Ser-37 is modified (phosphoserine; by AMPK). At Lys-44 the chain carries N6-lactoyllysine; alternate. Lys-44, Lys-47, and Lys-58 each carry N6-(2-hydroxyisobutyryl)lysine; alternate. Residues Lys-44 and Lys-47 each carry the N6-glutaryllysine; alternate modification. Lys-47 is modified (N6-methyllysine; alternate). Lys-58 is modified (N6,N6-dimethyllysine; alternate). Arg-80 bears the Dimethylated arginine mark. Lys-86 is modified (N6-acetyllysine; alternate). The residue at position 86 (Lys-86) is an N6-lactoyllysine; alternate. An N6-(2-hydroxyisobutyryl)lysine; alternate modification is found at Lys-86. Lys-86 bears the N6,N6,N6-trimethyllysine; alternate mark. Omega-N-methylarginine is present on residues Arg-87 and Arg-93. Position 109 is an N6-(beta-hydroxybutyryl)lysine; alternate (Lys-109). Lys-109 carries the post-translational modification N6-lactoyllysine; alternate. Lys-109 is subject to N6-(2-hydroxyisobutyryl)lysine; alternate. Lys-109 is modified (N6-glutaryllysine; alternate). Residue Lys-109 is modified to N6-methyllysine; alternate. Ser-113 is a glycosylation site (O-linked (GlcNAc) serine). Thr-116 carries the phosphothreonine modification. Lys-117 is subject to N6-(beta-hydroxybutyryl)lysine; alternate. N6-lactoyllysine; alternate is present on residues Lys-117 and Lys-121. Lys-117 and Lys-121 each carry N6-(2-hydroxyisobutyryl)lysine; alternate. An N6-glutaryllysine; alternate mark is found at Lys-117 and Lys-121. Lys-117 and Lys-121 each carry N6-succinyllysine; alternate. Lys-117 carries the N6-methylated lysine; alternate modification. Lys-121 participates in a covalent cross-link: Glycyl lysine isopeptide (Lys-Gly) (interchain with G-Cter in ubiquitin); alternate.

This sequence belongs to the histone H2B family. The nucleosome is a histone octamer containing two molecules each of H2A, H2B, H3 and H4 assembled in one H3-H4 heterotetramer and two H2A-H2B heterodimers. The octamer wraps approximately 147 bp of DNA. Post-translationally, monoubiquitination at Lys-35 (H2BK34Ub) by the MSL1/MSL2 dimer is required for histone H3 'Lys-4' (H3K4me) and 'Lys-79' (H3K79me) methylation and transcription activation at specific gene loci, such as HOXA9 and MEIS1 loci. Similarly, monoubiquitination at Lys-121 (H2BK120Ub) by the RNF20/40 complex gives a specific tag for epigenetic transcriptional activation and is also prerequisite for histone H3 'Lys-4' and 'Lys-79' methylation. It also functions cooperatively with the FACT dimer to stimulate elongation by RNA polymerase II. H2BK120Ub also acts as a regulator of mRNA splicing: deubiquitination by USP49 is required for efficient cotranscriptional splicing of a large set of exons. Phosphorylated on Ser-15 (H2BS14ph) by STK4/MST1 during apoptosis; which facilitates apoptotic chromatin condensation. Also phosphorylated on Ser-15 in response to DNA double strand breaks (DSBs), and in correlation with somatic hypermutation and immunoglobulin class-switch recombination. Phosphorylation at Ser-37 (H2BS36ph) by AMPK in response to stress promotes transcription. In terms of processing, glcNAcylation at Ser-113 promotes monoubiquitination of Lys-121. It fluctuates in response to extracellular glucose, and associates with transcribed genes. Post-translationally, ADP-ribosylated by PARP1 or PARP2 on Ser-7 (H2BS6ADPr) in response to DNA damage. H2BS6ADPr promotes recruitment of CHD1L. Mono-ADP-ribosylated on Glu-3 (H2BE2ADPr) by PARP3 in response to single-strand breaks. Poly ADP-ribosylation on Glu-36 (H2BE35ADPr) by PARP1 regulates adipogenesis: it inhibits phosphorylation at Ser-37 (H2BS36ph), thereby blocking expression of pro-adipogenetic genes. Crotonylation (Kcr) is specifically present in male germ cells and marks testis-specific genes in post-meiotic cells, including X-linked genes that escape sex chromosome inactivation in haploid cells. Crotonylation marks active promoters and enhancers and confers resistance to transcriptional repressors. It is also associated with post-meiotically activated genes on autosomes. In terms of processing, hydroxybutyrylation of histones is induced by starvation. Post-translationally, lactylated in macrophages by EP300/P300 by using lactoyl-CoA directly derived from endogenous or exogenous lactate, leading to stimulates gene transcription.

Its subcellular location is the nucleus. The protein resides in the chromosome. Functionally, core component of nucleosome. Nucleosomes wrap and compact DNA into chromatin, limiting DNA accessibility to the cellular machineries which require DNA as a template. Histones thereby play a central role in transcription regulation, DNA repair, DNA replication and chromosomal stability. DNA accessibility is regulated via a complex set of post-translational modifications of histones, also called histone code, and nucleosome remodeling. The sequence is that of H2B.U histone 2 from Mus musculus (Mouse).